The sequence spans 254 residues: Coproheme decarboxylase (254 aa).

Residues R136, 150–154 (YPMDK), H177, Q190, and S228 each bind Fe-coproporphyrin III. Residue Y150 is part of the active site.

Belongs to the ChdC family. Type 1 subfamily. It depends on Fe-coproporphyrin III as a cofactor.

It carries out the reaction Fe-coproporphyrin III + 2 H2O2 + 2 H(+) = heme b + 2 CO2 + 4 H2O. It catalyses the reaction Fe-coproporphyrin III + H2O2 + H(+) = harderoheme III + CO2 + 2 H2O. The enzyme catalyses harderoheme III + H2O2 + H(+) = heme b + CO2 + 2 H2O. The protein operates within porphyrin-containing compound metabolism; protoheme biosynthesis. In terms of biological role, involved in coproporphyrin-dependent heme b biosynthesis. Catalyzes the decarboxylation of Fe-coproporphyrin III (coproheme) to heme b (protoheme IX), the last step of the pathway. The reaction occurs in a stepwise manner with a three-propionate harderoheme intermediate. The sequence is that of Coproheme decarboxylase from Bacillus subtilis (strain 168).